The chain runs to 114 residues: Large ribosomal subunit protein uL22 (114 aa).

Belongs to the universal ribosomal protein uL22 family. In terms of assembly, part of the 50S ribosomal subunit.

In terms of biological role, this protein binds specifically to 23S rRNA; its binding is stimulated by other ribosomal proteins, e.g. L4, L17, and L20. It is important during the early stages of 50S assembly. It makes multiple contacts with different domains of the 23S rRNA in the assembled 50S subunit and ribosome. Functionally, the globular domain of the protein is located near the polypeptide exit tunnel on the outside of the subunit, while an extended beta-hairpin is found that lines the wall of the exit tunnel in the center of the 70S ribosome. The polypeptide is Large ribosomal subunit protein uL22 (Streptococcus mutans serotype c (strain ATCC 700610 / UA159)).